Reading from the N-terminus, the 200-residue chain is Small ribosomal subunit protein uS4 (200 aa).

The segment at 20 to 41 (SGTGKELEKRPYAPGQHGPNQR) is disordered. An S4 RNA-binding domain is found at 92–155 (ARLDAVVYSL…LKLDIIAESV (64 aa)).

It belongs to the universal ribosomal protein uS4 family. Part of the 30S ribosomal subunit. Contacts protein S5. The interaction surface between S4 and S5 is involved in control of translational fidelity.

Functionally, one of the primary rRNA binding proteins, it binds directly to 16S rRNA where it nucleates assembly of the body of the 30S subunit. In terms of biological role, with S5 and S12 plays an important role in translational accuracy. The protein is Small ribosomal subunit protein uS4 of Staphylococcus saprophyticus subsp. saprophyticus (strain ATCC 15305 / DSM 20229 / NCIMB 8711 / NCTC 7292 / S-41).